Reading from the N-terminus, the 131-residue chain is Holo-[acyl-carrier-protein] synthase (131 aa).

2 residues coordinate Mg(2+): D8 and E59.

This sequence belongs to the P-Pant transferase superfamily. AcpS family. Mg(2+) serves as cofactor.

It localises to the cytoplasm. The enzyme catalyses apo-[ACP] + CoA = holo-[ACP] + adenosine 3',5'-bisphosphate + H(+). Its function is as follows. Transfers the 4'-phosphopantetheine moiety from coenzyme A to a Ser of acyl-carrier-protein. The polypeptide is Holo-[acyl-carrier-protein] synthase (Rickettsia rickettsii (strain Sheila Smith)).